A 211-amino-acid polypeptide reads, in one-letter code: MRPTLGLFGGTFDPIHIGHLRLALELKQQLQLDGMRLMPCHLPAHRDQPGASSTQRATMLQLALAACPELSIDLREVARARASYTVDSLSELRAELGAETSLVFCLGTDSFAGLDRWHRWQELLQLAHLVVVERPGWDIPSTGPVRTLLAQHQGAPGQLRLAACGSIVRLAPRLLPISATEIRQLIGAGQSPQFLVPDSVWQYIGQERLYR.

This sequence belongs to the NadD family.

It catalyses the reaction nicotinate beta-D-ribonucleotide + ATP + H(+) = deamido-NAD(+) + diphosphate. Its pathway is cofactor biosynthesis; NAD(+) biosynthesis; deamido-NAD(+) from nicotinate D-ribonucleotide: step 1/1. Catalyzes the reversible adenylation of nicotinate mononucleotide (NaMN) to nicotinic acid adenine dinucleotide (NaAD). In Cellvibrio japonicus (strain Ueda107) (Pseudomonas fluorescens subsp. cellulosa), this protein is Probable nicotinate-nucleotide adenylyltransferase.